Consider the following 215-residue polypeptide: Probable GTP-binding protein EngB (215 aa).

Residues 30 to 204 (EGLEVAFAGR…QMVLAQWLGL (175 aa)) enclose the EngB-type G domain. GTP-binding positions include 38–45 (GRSNAGKS), 64–68 (GRTQL), 82–85 (DLPG), 149–152 (TKAD), and 182–185 (LFSA). Residues S45 and T66 each coordinate Mg(2+).

It belongs to the TRAFAC class TrmE-Era-EngA-EngB-Septin-like GTPase superfamily. EngB GTPase family. The cofactor is Mg(2+).

Its function is as follows. Necessary for normal cell division and for the maintenance of normal septation. This Pseudomonas aeruginosa (strain ATCC 15692 / DSM 22644 / CIP 104116 / JCM 14847 / LMG 12228 / 1C / PRS 101 / PAO1) protein is Probable GTP-binding protein EngB.